The following is a 200-amino-acid chain: NADH-quinone oxidoreductase subunit C (200 aa).

This sequence belongs to the complex I 30 kDa subunit family. As to quaternary structure, NDH-1 is composed of 14 different subunits. Subunits NuoB, C, D, E, F, and G constitute the peripheral sector of the complex.

Its subcellular location is the cell inner membrane. The enzyme catalyses a quinone + NADH + 5 H(+)(in) = a quinol + NAD(+) + 4 H(+)(out). NDH-1 shuttles electrons from NADH, via FMN and iron-sulfur (Fe-S) centers, to quinones in the respiratory chain. The immediate electron acceptor for the enzyme in this species is believed to be ubiquinone. Couples the redox reaction to proton translocation (for every two electrons transferred, four hydrogen ions are translocated across the cytoplasmic membrane), and thus conserves the redox energy in a proton gradient. This is NADH-quinone oxidoreductase subunit C from Ruegeria pomeroyi (strain ATCC 700808 / DSM 15171 / DSS-3) (Silicibacter pomeroyi).